The following is a 228-amino-acid chain: Ribulose-phosphate 3-epimerase (228 aa).

Substrate is bound at residue serine 12. 3 residues coordinate a divalent metal cation: histidine 37, aspartate 39, and histidine 70. Aspartate 39 functions as the Proton acceptor in the catalytic mechanism. Residues histidine 70, 146 to 149 (GFGG), 176 to 178 (DGG), and 198 to 199 (GS) each bind substrate. Residue aspartate 176 participates in a divalent metal cation binding. Aspartate 176 functions as the Proton donor in the catalytic mechanism.

The protein belongs to the ribulose-phosphate 3-epimerase family. The cofactor is a divalent metal cation.

The enzyme catalyses D-ribulose 5-phosphate = D-xylulose 5-phosphate. It participates in carbohydrate degradation. In terms of biological role, catalyzes the reversible epimerization of D-ribulose 5-phosphate to D-xylulose 5-phosphate. The chain is Ribulose-phosphate 3-epimerase from Rhodobacter capsulatus (Rhodopseudomonas capsulata).